A 413-amino-acid chain; its full sequence is Multifunctional CCA protein (413 aa).

Residues Gly8 and Arg11 each contribute to the ATP site. Residues Gly8 and Arg11 each contribute to the CTP site. Mg(2+) contacts are provided by Asp21 and Asp23. ATP contacts are provided by Arg91, Arg143, and Arg146. CTP is bound by residues Arg91, Arg143, and Arg146. The HD domain occupies 232-333; it reads TGVHVMMVVD…VRLFERSDAL (102 aa).

This sequence belongs to the tRNA nucleotidyltransferase/poly(A) polymerase family. Bacterial CCA-adding enzyme type 1 subfamily. As to quaternary structure, monomer. Can also form homodimers and oligomers. Mg(2+) is required as a cofactor. Ni(2+) serves as cofactor.

It carries out the reaction a tRNA precursor + 2 CTP + ATP = a tRNA with a 3' CCA end + 3 diphosphate. The enzyme catalyses a tRNA with a 3' CCA end + 2 CTP + ATP = a tRNA with a 3' CCACCA end + 3 diphosphate. Functionally, catalyzes the addition and repair of the essential 3'-terminal CCA sequence in tRNAs without using a nucleic acid template. Adds these three nucleotides in the order of C, C, and A to the tRNA nucleotide-73, using CTP and ATP as substrates and producing inorganic pyrophosphate. tRNA 3'-terminal CCA addition is required both for tRNA processing and repair. Also involved in tRNA surveillance by mediating tandem CCA addition to generate a CCACCA at the 3' terminus of unstable tRNAs. While stable tRNAs receive only 3'-terminal CCA, unstable tRNAs are marked with CCACCA and rapidly degraded. The sequence is that of Multifunctional CCA protein from Burkholderia orbicola (strain MC0-3).